A 393-amino-acid chain; its full sequence is MDAATLTYDTLRFAEFEDFPETSEPVWILGRKYSIFTEKDEILSDVASRLWFTYRRNFPAIGGTGPTSDTGWGCMLRCGQMIFAQALVCRHLGRDWRWTQRKRQPDSYFSVLNAFLDRKDSYYSIHQIAQMGVGEGKSIGQWYGPNTVAQVLKKLAVFDTWSSLAVHIAMDNTVVMEEIRRLCRASLPCAGAAALSMESERHCNGLPAGAEVTNRPLAWRPLVLLIPLRLGLTDINEAYVETLKHCFMMPQSLGVIGGKPNSAHYFIGYVGEELIYLDPHTTQPAVELTDSCFIPDESFHCQHPPCRMGIGELDPSIAVGFFCKTEEDFNDWCQQVKKLSQLGGALPMFELVEQQPSHLACQDVLNLSLDSSDVERLERFFDSEDEDFEILSL.

Met-1 bears the N-acetylmethionine mark. The residue at position 34 (Ser-34) is a Phosphoserine. Residue Cys-74 is the Nucleophile of the active site. An S-nitrosocysteine modification is found at Cys-189. Catalysis depends on residues Asp-278 and His-280. An S-nitrosocysteine mark is found at Cys-292 and Cys-301. Residues Cys-292 and Cys-361 are joined by a disulfide bond. Phosphoserine occurs at positions 316 and 383. An LIR motif is present at residues 388-391 (FEIL). Ser-392 carries the phosphoserine modification.

It belongs to the peptidase C54 family. In terms of assembly, interacts with PFKP; promoting phosphorylation of ATG4B at Ser-34. Interacts with GBP7. Phosphorylation at Ser-383 and Ser-392 promotes autophagy by increasing protein delipidation activity without affecting proteolytic activation of ATG8 proteins. Phosphorylation at Ser-316 by ULK1 inhibits autophagy by decreasing both proteolytic activation and delipidation activities. Phosphorylation at Ser-316 is dephosphorylated by protein phosphatase 2A (PP2A). Phosphorylation at Ser-34 by AKT2 promotes its hydrolase activity, leading to increased proteolytic activation and delipidation of ATG8 family proteins. Phosphorylation at Ser-34 by AKT1 promotes mitochondrial localization and inhibition of the F1F0-ATP synthase activity, leading to elevation of mitochondrial reactive oxygen species (ROS). Post-translationally, ubiquitinated by RNF5, leading to its degradation by the proteasome. In terms of processing, S-nitrosylation in response to high glucose decreases both proteolytic activation and delipidation activities. O-glycosylated by OGT, leading to increase protease activity, thereby promoting the proteolytic activation of ATG8 family proteins. Post-translationally, forms reversible intrachain disulfide bonds in response to oxidative stress. Forms interchain disulfide bonds, leading to formation of homooligomers in response to oxidation.

Its subcellular location is the cytoplasm. The protein resides in the cytosol. It localises to the cytoplasmic vesicle. The protein localises to the autophagosome. It is found in the endoplasmic reticulum. Its subcellular location is the mitochondrion. It carries out the reaction [protein]-C-terminal L-amino acid-glycyl-phosphatidylethanolamide + H2O = [protein]-C-terminal L-amino acid-glycine + a 1,2-diacyl-sn-glycero-3-phosphoethanolamine. The enzyme catalyses [protein]-C-terminal L-amino acid-glycyl-phosphatidylserine + H2O = [protein]-C-terminal L-amino acid-glycine + a 1,2-diacyl-sn-glycero-3-phospho-L-serine. Its activity is regulated as follows. Inhibited by N-ethylmaleimide. Redox-regulated during autophagy since reducing conditions activate ATG4A whereas an oxidizing environment such as the presence of H(2)O(2) inhibits its activity. The cysteine protease activity compounds is inhibited by styrylquinoline compounds 4-28 and LV-320. Functionally, cysteine protease that plays a key role in autophagy by mediating both proteolytic activation and delipidation of ATG8 family proteins. Required for canonical autophagy (macroautophagy), non-canonical autophagy as well as for mitophagy. The protease activity is required for proteolytic activation of ATG8 family proteins: cleaves the C-terminal amino acid of ATG8 proteins MAP1LC3A, MAP1LC3B, MAP1LC3C, GABARAPL1, GABARAPL2 and GABARAP, to reveal a C-terminal glycine. Exposure of the glycine at the C-terminus is essential for ATG8 proteins conjugation to phosphatidylethanolamine (PE) and insertion to membranes, which is necessary for autophagy. Protease activity is also required to counteract formation of high-molecular weight conjugates of ATG8 proteins (ATG8ylation): acts as a deubiquitinating-like enzyme that removes ATG8 conjugated to other proteins, such as ATG3. In addition to the protease activity, also mediates delipidation of ATG8 family proteins. Catalyzes delipidation of PE-conjugated forms of ATG8 proteins during macroautophagy. Also involved in non-canonical autophagy, a parallel pathway involving conjugation of ATG8 proteins to single membranes at endolysosomal compartments, by catalyzing delipidation of ATG8 proteins conjugated to phosphatidylserine (PS). Compared to other members of the family (ATG4A, ATG4C or ATG4C), constitutes the major protein for proteolytic activation of ATG8 proteins, while it displays weaker delipidation activity than other ATG4 paralogs. Involved in phagophore growth during mitophagy independently of its protease activity and of ATG8 proteins: acts by regulating ATG9A trafficking to mitochondria and promoting phagophore-endoplasmic reticulum contacts during the lipid transfer phase of mitophagy. In Rattus norvegicus (Rat), this protein is Cysteine protease ATG4B.